Consider the following 246-residue polypeptide: Transcriptional regulatory protein LytR (246 aa).

In terms of domain architecture, Response regulatory spans 2 to 116; sequence KALIIDDEPL…RIEQAVNKVR (115 aa). D53 bears the 4-aspartylphosphate mark. The HTH LytTR-type domain maps to 141-245; it reads LPVEIDDKIH…MKDFKASIGL (105 aa).

In terms of assembly, homodimer; when phosphorylated. In terms of processing, phosphorylated and dephosphorylated by LytS.

It is found in the cytoplasm. Its function is as follows. Member of the two-component regulatory system LytR/LytS that regulates genes involved in autolysis, programmed cell death, biofilm formation and cell wall metabolism. Also participates in sensing and responding to host defense cationic antimicrobial peptides (HDPs). Upon phosphorylation by LytS, functions as a transcription regulator by direct binding to promoter regions of target genes including lrgA and lrgB, to positively regulate their expression. The polypeptide is Transcriptional regulatory protein LytR (lytR) (Staphylococcus aureus (strain MW2)).